We begin with the raw amino-acid sequence, 643 residues long: DNA polymerase III subunit tau (643 aa).

Residue 45–52 (GTRGVGKT) participates in ATP binding. Positions 64, 73, 76, and 79 each coordinate Zn(2+). The disordered stretch occupies residues 385–404 (TPTQVPPQPQSAPQQAPTVP).

Belongs to the DnaX/STICHEL family. As to quaternary structure, the DNA polymerase III holoenzyme complex contains at least 10 different subunits organized into 3 functionally essential subassemblies: the Pol III core, the beta sliding clamp processivity factor and the clamp-loading complex. The Pol III core (subunits alpha, epsilon and theta) contains the polymerase and the 3'-5' exonuclease proofreading activities. The polymerase is tethered to the template via the dimeric beta sliding clamp processivity factor. The clamp-loading complex (also called gamma complex) assembles the beta sliding clamp onto the primed template and plays a central role in the organization and communication at the replication fork. The clamp-loading complex contains delta, delta', psi and chi, and 3 copies of either or both of two different DnaX proteins, gamma and tau. The DNA replisome complex has a single clamp loader (3 tau and 1 each of delta, delta', psi and chi subunits) which binds 3 Pol III cores (1 core on the leading strand and 2 on the lagging strand) each with a beta sliding clamp dimer. Additional proteins in the replisome are other copies of gamma, psi and chi, Ssb, DNA helicase and RNA primase. The clamp loader hydrolyzes ATP to assemble the beta processivity factor onto the primed template and plays a central role in the organization and communication at the replication fork; the minimal complex to load the beta sliding clamp on DNA is delta, delta', gamma.

The catalysed reaction is DNA(n) + a 2'-deoxyribonucleoside 5'-triphosphate = DNA(n+1) + diphosphate. Functionally, part of the beta sliding clamp loading complex, which hydrolyzes ATP to load the beta clamp onto primed DNA to form the DNA replication pre-initiation complex. DNA polymerase III is a complex, multichain enzyme responsible for most of the replicative synthesis in bacteria. This DNA polymerase also exhibits 3'-5' exonuclease activity. The gamma complex (gamma(3),delta,delta') is thought to load beta dimers onto DNA by binding ATP which alters the complex's conformation so it can bind beta sliding clamp dimers and open them at one interface. Primed DNA is recognized, ATP is hydrolyzed releasing the gamma complex and closing the beta sliding clamp ring around the primed DNA. In terms of biological role, serves as a scaffold to trimerize the core complex. Its function is as follows. Interacts with the delta and delta' subunits to transfer the beta subunit on the DNA. Interacts with ATP, drives ATP-induced conformational changes in the gamma complex that opens the beta sliding clamp ring. After loading of primed DNA ATP is hydrolyzed and the beta sliding clamp ring closes. This chain is DNA polymerase III subunit tau (dnaX), found in Escherichia coli (strain K12).